A 116-amino-acid polypeptide reads, in one-letter code: NADH-ubiquinone oxidoreductase chain 3 (116 aa).

3 helical membrane passes run 3–23 (LFAT…LVSF), 56–76 (FFLV…LLPL), and 88–108 (TLFW…YEWA).

This sequence belongs to the complex I subunit 3 family. Core subunit of respiratory chain NADH dehydrogenase (Complex I) which is composed of 45 different subunits.

Its subcellular location is the mitochondrion inner membrane. The catalysed reaction is a ubiquinone + NADH + 5 H(+)(in) = a ubiquinol + NAD(+) + 4 H(+)(out). Its function is as follows. Core subunit of the mitochondrial membrane respiratory chain NADH dehydrogenase (Complex I) which catalyzes electron transfer from NADH through the respiratory chain, using ubiquinone as an electron acceptor. Essential for the catalytic activity of complex I. The protein is NADH-ubiquinone oxidoreductase chain 3 (mt-nd3) of Danio rerio (Zebrafish).